The sequence spans 556 residues: Formate--tetrahydrofolate ligase (556 aa).

65–72 (TPAGEGKS) provides a ligand contact to ATP.

Belongs to the formate--tetrahydrofolate ligase family.

The catalysed reaction is (6S)-5,6,7,8-tetrahydrofolate + formate + ATP = (6R)-10-formyltetrahydrofolate + ADP + phosphate. It functions in the pathway one-carbon metabolism; tetrahydrofolate interconversion. This Streptococcus agalactiae serotype III (strain NEM316) protein is Formate--tetrahydrofolate ligase.